A 178-amino-acid chain; its full sequence is Conodipine-P2 (178 aa).

The signal sequence occupies residues 1 to 24 (MKLLAPVLWAMAALGVTWLVAVDS). A 4-hydroxyproline mark is found at Pro-38, Pro-42, and Pro-49. The active site involves His-54. Residues 98 to 130 (KREVTSHRATSIAHSRLWKTALDQKSFLNRKAR) constitute a propeptide, interchain peptide. Position 131 is a pyrrolidone carboxylic acid (Gln-131). Pro-137 is modified (4-hydroxyproline).

This sequence belongs to the phospholipase A2 family. Group IX subfamily. As to quaternary structure, heterodimer of an alpha and a beta chain; probably disulfide-linked. Ca(2+) is required as a cofactor. Expressed by the venom duct.

The protein resides in the secreted. The enzyme catalyses a 1,2-diacyl-sn-glycero-3-phosphocholine + H2O = a 1-acyl-sn-glycero-3-phosphocholine + a fatty acid + H(+). Catalyzes the calcium-dependent hydrolysis of the 2-acyl groups in 3-sn-phosphoglycerides. This Conus purpurascens (Purple cone) protein is Conodipine-P2.